The sequence spans 380 residues: Cytochrome b (380 aa).

Transmembrane regions (helical) follow at residues 33-53, 77-98, 113-133, and 178-198; these read LGSL…FLAM, WVIR…FLHI, WNIG…GYVL, and FFTF…LHLL. Residues histidine 83 and histidine 97 each contribute to the heme b site. Residues histidine 182 and histidine 196 each coordinate heme b. A ubiquinone is bound at residue histidine 201. 4 helical membrane-spanning segments follow: residues 226-246, 288-308, 320-340, and 347-367; these read TKDI…VLFS, LGGV…PMLH, LSQL…WIGG, and FITI…ILVP.

This sequence belongs to the cytochrome b family. In terms of assembly, the cytochrome bc1 complex contains 11 subunits: 3 respiratory subunits (MT-CYB, CYC1 and UQCRFS1), 2 core proteins (UQCRC1 and UQCRC2) and 6 low-molecular weight proteins (UQCRH/QCR6, UQCRB/QCR7, UQCRQ/QCR8, UQCR10/QCR9, UQCR11/QCR10 and a cleavage product of UQCRFS1). This cytochrome bc1 complex then forms a dimer. The cofactor is heme b.

It is found in the mitochondrion inner membrane. Its function is as follows. Component of the ubiquinol-cytochrome c reductase complex (complex III or cytochrome b-c1 complex) that is part of the mitochondrial respiratory chain. The b-c1 complex mediates electron transfer from ubiquinol to cytochrome c. Contributes to the generation of a proton gradient across the mitochondrial membrane that is then used for ATP synthesis. The protein is Cytochrome b (MT-CYB) of Nomascus leucogenys (Northern white-cheeked gibbon).